Consider the following 719-residue polypeptide: Alpha-galactosidase 2 (719 aa).

Aspartate 472 (nucleophile) is an active-site residue. Aspartate 542 serves as the catalytic Proton donor.

Belongs to the glycosyl hydrolase 36 family.

It carries out the reaction Hydrolysis of terminal, non-reducing alpha-D-galactose residues in alpha-D-galactosides, including galactose oligosaccharides, galactomannans and galactolipids.. Functionally, alpha-galactosidase associated with the sucrase operon. This is Alpha-galactosidase 2 (agaS) from Pediococcus pentosaceus.